The primary structure comprises 258 residues: Spectinomycin 9-adenylyltransferase (258 aa).

The catalysed reaction is spectinomycin + ATP = 9-O-adenylylspectinomycin + diphosphate. Mediates bacterial resistance to spectinomycin, is probably a spectinomycin 9-adenylyltransferase. The polypeptide is Spectinomycin 9-adenylyltransferase (Campylobacter jejuni).